The primary structure comprises 953 residues: Calcium-transporting ATPase type 2C member 1 (953 aa).

At 1–104 (MDNLLPQSRF…NEFDISEDEP (104 aa)) the chain is on the cytoplasmic side. A helical membrane pass occupies residues 105–125 (LWKKYISQFKNPLIMLLLASA). Residues 126–138 (VISVLMHQFDDAV) are Lumenal-facing. A helical membrane pass occupies residues 139-157 (SITVAILIVVTVAFVQEYR). The Cytoplasmic segment spans residues 158 to 296 (SEKSLEELSK…APKTPLQKSM (139 aa)). Residues 297 to 316 (DLLGKQLSFYSFGIIGIIML) traverse the membrane as a helical segment. Topologically, residues 317 to 328 (VGWLLGKDILEM) are lumenal. Residues 329–346 (FTISVSLAVAAIPEGLPI) traverse the membrane as a helical segment. Residues valine 337, alanine 338, isoleucine 340, and glutamate 342 each contribute to the Ca(2+) site. Residues 347–733 (VVTVTLALGV…EEGKGIYNNI (387 aa)) lie on the Cytoplasmic side of the membrane. The active-site 4-aspartylphosphate intermediate is the aspartate 384. Mg(2+) is bound by residues aspartate 678 and aspartate 682. A helical transmembrane segment spans residues 734 to 753 (KNFVRFQLSTSIAALTLISL). Residues 754 to 763 (ATLMNFPNPL) lie on the Lumenal side of the membrane. A helical transmembrane segment spans residues 764–784 (NAMQILWINIIMDGPPAQSLG). Asparagine 772 and aspartate 776 together coordinate Ca(2+). The Cytoplasmic portion of the chain corresponds to 785–804 (VEPVDKDVIRKPPRNWKDSI). A helical transmembrane segment spans residues 805–824 (LTKNLILKILVSSIIIVCGT). The Lumenal portion of the chain corresponds to 825-842 (LFVFWRELRDNVITPRDT). Residues 843–862 (TMTFTCFVFFDMFNALSSRS) traverse the membrane as a helical segment. At 863–875 (QTKSVFEIGLCSN) the chain is on the cytoplasmic side. The chain crosses the membrane as a helical span at residues 876–894 (KMFCYAVLGSIMGQLLVIY). The Lumenal segment spans residues 895–909 (FPPLQKVFQTESLSI). The helical transmembrane segment at 910–930 (LDLLFLLGLTSSVCIVAEIIK) threads the bilayer. The Cytoplasmic portion of the chain corresponds to 931–953 (KVERSREKIQKPVSSTSSSFLEV).

The protein belongs to the cation transport ATPase (P-type) (TC 3.A.3) family. Type IIA subfamily. In terms of assembly, monomer. Homodimer.

Its subcellular location is the golgi apparatus. The protein localises to the trans-Golgi network membrane. It localises to the golgi stack membrane. The catalysed reaction is Ca(2+)(in) + ATP + H2O = Ca(2+)(out) + ADP + phosphate + H(+). It catalyses the reaction Mn(2+)(in) + ATP + H2O = Mn(2+)(out) + ADP + phosphate + H(+). ATP-driven pump that supplies the Golgi apparatus with Ca(2+) and Mn(2+) ions, both essential cofactors for processing and trafficking of newly synthesized proteins in the secretory pathway. Within a catalytic cycle, acquires Ca(2+) or Mn(2+) ions on the cytoplasmic side of the membrane and delivers them to the lumenal side. The transfer of ions across the membrane is coupled to ATP hydrolysis and is associated with a transient phosphorylation that shifts the pump conformation from inward-facing to outward-facing state. Plays a primary role in the maintenance of Ca(2+) homeostasis in the trans-Golgi compartment with a functional impact on Golgi and post-Golgi protein sorting as well as a structural impact on cisternae morphology. Responsible for loading the Golgi stores with Ca(2+) ions in keratinocytes, contributing to keratinocyte differentiation and epidermis integrity. Participates in Ca(2+) and Mn(2+) ions uptake into the Golgi store of hippocampal neurons and regulates protein trafficking required for neural polarity. May also play a role in the maintenance of Ca(2+) and Mn(2+) homeostasis and signaling in the cytosol while preventing cytotoxicity. This Bos taurus (Bovine) protein is Calcium-transporting ATPase type 2C member 1 (ATP2C1).